The following is a 275-amino-acid chain: Adaptin ear-binding coat-associated protein 1 (275 aa).

The disordered stretch occupies residues 170-191 (KGGASKPRTARGGGLSLLPPPP). Residue Arg-180 is modified to Omega-N-methylarginine. Thr-211 is subject to Phosphothreonine. Short sequence motifs (WXXF motif) lie at residues 252–255 (WGDF) and 272–275 (WVQF). The tract at residues 254 to 275 (DFSTASSSVPNQAPQPSNWVQF) is disordered. Polar residues predominate over residues 256 to 275 (STASSSVPNQAPQPSNWVQF).

Belongs to the NECAP family. In terms of assembly, interacts with AP1G1 and AP2A1 components of the adapter protein complexes AP-1 and AP-2. Interacts with the GAE domain proteins GGA1, GGA2 and GGA3.

Its subcellular location is the cytoplasmic vesicle. It localises to the clathrin-coated vesicle membrane. The protein resides in the cell membrane. Involved in endocytosis. This chain is Adaptin ear-binding coat-associated protein 1 (NECAP1), found in Homo sapiens (Human).